The following is a 728-amino-acid chain: MDDDGELGMFFPSWTSKNPIDTVESRGLMFSCFVAALVGILTIAYTAFQWRRNINLSWTKAIARSKKNPKARHKVPVAPHSWELDPIARAKNLNCCVCLKSMSPSQAIVASESFFHRCTICGAAAHFNCSSSAPKDCKCVSMVGFEHVVHQWAVRWTEGADQTDDSSFCSYCDESCSSSFLGGSPIWCCLWCQRLVHVDCHSNMSNETGDICDLGPLRRLILCPLYVKELTRNPSGGFLSSITHGANELASTALASIRIQSKKYKQTNETSADTGNSGSNCDESTESTADTGPTVNGAHAVLENSISVMNGDSSNGDSDSNGKLEKKPSVKRTGSFGQKEYHALRSKLKYELADLPSDARPLLVFINKKSGAQRGDSLRQRLHLHLNPVQVFELSSVQGPEVGLFLFRKVPHFRVLVCGGDGTAGWVLDAIEKQNFISPPAVAILPAGTGNDLSRVLNWGGGLGSVERQGGLSTVLQNIEHAAVTVLDRWKVSILNQQGKQLQPPKYMNNYIGVGCDAKVALEIHNLREENPERFYSQFMNKVLYAREGARSIMDRTFEDFPWQVRVEVDGVDIEVPEDAEGILVANIGSYMGGVDLWQNEDETYENFDPQSMHDKIVEVVSISGTWHLGKLQVGLSRARRLAQGSAVKIQLCAPLPVQIDGEPWNQQPCTLTISHHGQAFMLKRAAEEPLGHAAAIITDVLENAETNQVINASQKRTLLQEMALRLT.

The chain crosses the membrane as a helical span at residues 27-48; that stretch reads GLMFSCFVAALVGILTIAYTAF. Phorbol-ester/DAG-type zinc fingers lie at residues 79–137 and 149–212; these read PHSW…PKDC and VHQW…GDIC. Disordered regions lie at residues 265–296 and 308–336; these read KQTN…PTVN and VMNG…TGSF. The span at 267–294 shows a compositional bias: polar residues; sequence TNETSADTGNSGSNCDESTESTADTGPT. Low complexity predominate over residues 310-319; the sequence is NGDSSNGDSD. Residues 357-496 enclose the DAGKc domain; the sequence is SDARPLLVFI…LDRWKVSILN (140 aa). Residues K491 and K500 each participate in a glycyl lysine isopeptide (Lys-Gly) (interchain with G-Cter in ubiquitin) cross-link.

The protein belongs to the eukaryotic diacylglycerol kinase family. In terms of assembly, monomer. As to expression, expressed in roots, shoots, and leaves.

It is found in the membrane. The catalysed reaction is a 1,2-diacyl-sn-glycerol + ATP = a 1,2-diacyl-sn-glycero-3-phosphate + ADP + H(+). Functionally, phosphorylates the second messenger diacylglycerol (DAG) to generate phosphatidic acid (PA), another important signaling molecule. PA is required for plant development and responses to abiotic stress and pathogen attack. May be involved in the accumulation of PA during cold stress. This Arabidopsis thaliana (Mouse-ear cress) protein is Diacylglycerol kinase 1 (DGK1).